Consider the following 563-residue polypeptide: Chaperonin GroEL 1 (563 aa).

ATP-binding positions include 29-32 (TIGP), 86-90 (DGTTT), G413, 476-478 (NAA), and D492. The disordered stretch occupies residues 520 to 545 (DKPEPPSPAGGEGGGDPMGGMGGMGG). Gly residues predominate over residues 529-545 (GGEGGGDPMGGMGGMGG).

Belongs to the chaperonin (HSP60) family. In terms of assembly, forms a cylinder of 14 subunits composed of two heptameric rings stacked back-to-back. Interacts with the co-chaperonin GroES.

The protein localises to the cytoplasm. The enzyme catalyses ATP + H2O + a folded polypeptide = ADP + phosphate + an unfolded polypeptide.. In terms of biological role, together with its co-chaperonin GroES, plays an essential role in assisting protein folding. The GroEL-GroES system forms a nano-cage that allows encapsulation of the non-native substrate proteins and provides a physical environment optimized to promote and accelerate protein folding. The protein is Chaperonin GroEL 1 of Prochlorococcus marinus (strain SARG / CCMP1375 / SS120).